The sequence spans 577 residues: External alternative NAD(P)H-ubiquinone oxidoreductase B1, mitochondrial (577 aa).

The transit peptide at 1 to 35 (MRGFTYLSKVLHSHSSYSKLLVLCSVSTGGLLVYA) directs the protein to the mitochondrion. Residue 57 to 87 (RVVVLGTGWGGTSFLKDVDISSYDVQVVSPR) coordinates FAD. 221 to 257 (LHFVIVGGGPTGVEFAAELHDYVYEDLVKIYPSVKDF) is an NAD(+) binding site. Residues 378–413 (KVMEDISTIFEAADKDDSGTLSVEEFRDVLEDIIIR) enclose the EF-hand domain. Ca(2+) contacts are provided by Asp391, Asp393, Ser395, Thr397, and Glu402. The Microbody targeting signal signature appears at 568–577 (YIFGRDSSRI).

It belongs to the NADH dehydrogenase family. FAD serves as cofactor.

The protein localises to the mitochondrion inner membrane. The protein resides in the peroxisome. It carries out the reaction a quinone + NADH + H(+) = a quinol + NAD(+). The catalysed reaction is a ubiquinone + NADH + H(+) = a ubiquinol + NAD(+). With respect to regulation, activity is calcium-dependent with a more pronounced effect at higher pH. Its function is as follows. Calcium-dependent NAD(P)H dehydrogenase. Binds calcium ions. Alternative NADH-ubiquinone oxidoreductase which catalyzes the oxidation of mitochondrial NADH does not translocate protons across the inner mitochondrial membrane. This chain is External alternative NAD(P)H-ubiquinone oxidoreductase B1, mitochondrial (NDB1), found in Solanum tuberosum (Potato).